A 325-amino-acid chain; its full sequence is MQQSTGAATSSAADSGMGATDLVSRCVGDGGGGGGNSCSGGSSDPAAINTTISSKQADAREPQEQQVAIHYLASFHELCVVTALLPLVTLFTCFVTAYVFQYDDVHETHCRVYNIIPSISAITGVSPQRYFWRFSIALHIGPRIPIAFVYKNYYRSQLRRISPAQVPQTSLLITLILVLNCIEIASLGGVTYISNRENYPVHERIFITFMVCSLCYMLATIKLNGILNAGQALSEKQLLSIKWKKILFAVSILSTVGLLVFFAKHRFYCHDLAFSWFAFFEYLIAIANMLFHFTIIWDFPSQFMMIVQGPRENLAQYLSNRPKLD.

Transmembrane regions (helical) follow at residues Val-80–Phe-100, Tyr-130–Tyr-150, Leu-171–Thr-191, Ile-205–Gly-225, Trp-243–Ala-263, and Trp-276–Ile-296.

This sequence belongs to the PGAP2 family.

The protein localises to the membrane. The protein is Post-GPI attachment to proteins factor 2-like of Drosophila melanogaster (Fruit fly).